Here is a 365-residue protein sequence, read N- to C-terminus: Chorismate synthase (365 aa).

Arginine 48 and arginine 54 together coordinate NADP(+). FMN is bound by residues 129-131, 241-242, glycine 285, 300-304, and arginine 326; these read RSS, NA, and KPTSS.

The protein belongs to the chorismate synthase family. As to quaternary structure, homotetramer. Requires FMNH2 as cofactor.

The enzyme catalyses 5-O-(1-carboxyvinyl)-3-phosphoshikimate = chorismate + phosphate. It functions in the pathway metabolic intermediate biosynthesis; chorismate biosynthesis; chorismate from D-erythrose 4-phosphate and phosphoenolpyruvate: step 7/7. Functionally, catalyzes the anti-1,4-elimination of the C-3 phosphate and the C-6 proR hydrogen from 5-enolpyruvylshikimate-3-phosphate (EPSP) to yield chorismate, which is the branch point compound that serves as the starting substrate for the three terminal pathways of aromatic amino acid biosynthesis. This reaction introduces a second double bond into the aromatic ring system. The polypeptide is Chorismate synthase (Parvibaculum lavamentivorans (strain DS-1 / DSM 13023 / NCIMB 13966)).